A 463-amino-acid polypeptide reads, in one-letter code: Rubisco accumulation factor 1, chloroplastic (463 aa).

The segment covering Met1–Pro18 has biased composition (low complexity). A chloroplast-targeting transit peptide spans Met1–Arg31. A disordered region spans residues Met1–Pro84. Basic residues predominate over residues Arg19–Ser33. Positions Pro43–Gly53 are enriched in gly residues. The segment at Leu83–Leu275 is N-terminal alpha-helix. Positions Arg240 to Glu294 form a coiled coil. The C-terminal beta sheet stretch occupies residues Val305–Pro450.

Belongs to the RAF family. Homotrimer. As to expression, expressed in bundle sheath.

The protein localises to the plastid. It localises to the chloroplast. Required for assembly or stability of RuBisCO. Acts at a postchaperonin step to fold and/or assemble the large subunit (LS) into RuBisCO. The sequence is that of Rubisco accumulation factor 1, chloroplastic from Zea mays (Maize).